Here is a 257-residue protein sequence, read N- to C-terminus: MIELKNVSKVYPNGVIGLDNINLTIEKGEFVAIVGLSGAGKSTLLRAMNRLIDISDGDIMINRRSITSASGKELRMMRRDIGMIFQNFNLVKRSTVLRNVLSGRVAHNHTFRTLFNLFPQKDVDLALQSLERVNILEKAYTRSSQLSGGQQQRVSIARALAQEAKMILADEPTASLDPVTTKQVMDDLKKINTEDQVTVVINLHFVDLAREYATRIIGLRDGKVVFDGPAQRATDEVFKDIYGRPLKEDELLGKEVG.

Residues 2-246 enclose the ABC transporter domain; that stretch reads IELKNVSKVY…VFKDIYGRPL (245 aa). 35-42 provides a ligand contact to ATP; it reads GLSGAGKS.

It belongs to the ABC transporter superfamily. Phosphonates importer (TC 3.A.1.9.1) family. The complex is composed of two ATP-binding proteins (PhnC), two transmembrane proteins (PhnE) and a solute-binding protein (PhnD).

The protein localises to the cell membrane. The enzyme catalyses phosphonate(out) + ATP + H2O = phosphonate(in) + ADP + phosphate + H(+). In terms of biological role, part of the ABC transporter complex PhnCDE involved in phosphonates import. Responsible for energy coupling to the transport system. This Halalkalibacterium halodurans (strain ATCC BAA-125 / DSM 18197 / FERM 7344 / JCM 9153 / C-125) (Bacillus halodurans) protein is Phosphonates import ATP-binding protein PhnC 1.